A 532-amino-acid polypeptide reads, in one-letter code: Light-independent protochlorophyllide reductase subunit B (532 aa).

Residue Asp-36 participates in [4Fe-4S] cluster binding. Asp-292 functions as the Proton donor in the catalytic mechanism. 428–429 is a binding site for substrate; sequence GL. The disordered stretch occupies residues 445–486; the sequence is EEEEPESISNGHAAAAGSEGGVPDSGEAGDAGDTDGMPWSPD.

This sequence belongs to the ChlB/BchB/BchZ family. In terms of assembly, protochlorophyllide reductase is composed of three subunits; BchL, BchN and BchB. Forms a heterotetramer of two BchB and two BchN subunits. [4Fe-4S] cluster serves as cofactor.

It carries out the reaction chlorophyllide a + oxidized 2[4Fe-4S]-[ferredoxin] + 2 ADP + 2 phosphate = protochlorophyllide a + reduced 2[4Fe-4S]-[ferredoxin] + 2 ATP + 2 H2O. Its pathway is porphyrin-containing compound metabolism; bacteriochlorophyll biosynthesis (light-independent). Component of the dark-operative protochlorophyllide reductase (DPOR) that uses Mg-ATP and reduced ferredoxin to reduce ring D of protochlorophyllide (Pchlide) to form chlorophyllide a (Chlide). This reaction is light-independent. The NB-protein (BchN-BchB) is the catalytic component of the complex. The sequence is that of Light-independent protochlorophyllide reductase subunit B from Chlorobium phaeobacteroides (strain BS1).